A 415-amino-acid polypeptide reads, in one-letter code: MKHLPAQDEQVFNAIKNERERQQTKIELIASENFVSEAVMEAQGSVLTNKYAEGYPGKRYYGGCEHVDVVEDIARDRAKEIFGAEHVNVQPHSGAQANMAVYFTILEQGDTVLGMNLSHGGHLTHGSPVNFSGVQYNFVEYGVDKETQYIDYDDVREKALAHKPKLIVAGASAYPRTIDFKKFREIADEVGAYFMVDMAHIAGLVAAGLHPNPVPYADFVTTTTHKTLRGPRGGMILCREEFGKKIDKSIFPGIQGGPLMHVIAAKAVSFGEVLQDDFKTYAQNVISNAKRLAEALTKEGIQLVSGGTDNHLILVDLRSLGLTGKVAEHVLDEIGITSNKNAIPYDPEKPFVTSGIRLGTAAVTSRGFDGDALEEVGAIIALALKNHEDEGKLEEARQRVAALTDKFPLYKELDY.

(6S)-5,6,7,8-tetrahydrofolate contacts are provided by residues Leu117 and 121-123 (GHL). Position 226 is an N6-(pyridoxal phosphate)lysine (Lys226). (6S)-5,6,7,8-tetrahydrofolate is bound at residue Glu241.

Belongs to the SHMT family. As to quaternary structure, homodimer. Pyridoxal 5'-phosphate serves as cofactor.

Its subcellular location is the cytoplasm. The catalysed reaction is (6R)-5,10-methylene-5,6,7,8-tetrahydrofolate + glycine + H2O = (6S)-5,6,7,8-tetrahydrofolate + L-serine. Its pathway is one-carbon metabolism; tetrahydrofolate interconversion. It participates in amino-acid biosynthesis; glycine biosynthesis; glycine from L-serine: step 1/1. Functionally, catalyzes the reversible interconversion of serine and glycine with tetrahydrofolate (THF) serving as the one-carbon carrier. This reaction serves as the major source of one-carbon groups required for the biosynthesis of purines, thymidylate, methionine, and other important biomolecules. Also exhibits THF-independent aldolase activity toward beta-hydroxyamino acids, producing glycine and aldehydes, via a retro-aldol mechanism. The chain is Serine hydroxymethyltransferase from Bacillus subtilis (strain 168).